The sequence spans 92 residues: UPF0297 protein TTE1249 (92 aa).

It belongs to the UPF0297 family.

This is UPF0297 protein TTE1249 from Caldanaerobacter subterraneus subsp. tengcongensis (strain DSM 15242 / JCM 11007 / NBRC 100824 / MB4) (Thermoanaerobacter tengcongensis).